A 243-amino-acid chain; its full sequence is GrpE protein homolog, mitochondrial (243 aa).

The interval 56-79 (KKEEPKDENDAAAAEEDANLTEEQ) is disordered.

This sequence belongs to the GrpE family. In terms of assembly, component of the PAM complex, at least composed of mtHsp70, MGE1, TIM44, PAM16, PAM17 and PAM18.

It localises to the mitochondrion matrix. Essential component of the PAM complex, a complex required for the translocation of transit peptide-containing proteins from the inner membrane into the mitochondrial matrix in an ATP-dependent manner. Seems to control the nucleotide-dependent binding of SSC1 to substrate proteins. The protein is GrpE protein homolog, mitochondrial (mge1) of Kluyveromyces lactis (strain ATCC 8585 / CBS 2359 / DSM 70799 / NBRC 1267 / NRRL Y-1140 / WM37) (Yeast).